The primary structure comprises 178 residues: Cytochrome b6-f complex subunit 4 (178 aa).

3 helical membrane-spanning segments follow: residues 36–56, 95–115, and 131–151; these read LSYI…GLAV, LLGV…PFLE, and TVSL…ALPI.

It belongs to the cytochrome b family. PetD subfamily. In terms of assembly, the 4 large subunits of the cytochrome b6-f complex are cytochrome b6, subunit IV (17 kDa polypeptide, petD), cytochrome f and the Rieske protein, while the 4 small subunits are petG, petL, petM and petN. The complex functions as a dimer.

The protein localises to the plastid. It localises to the chloroplast thylakoid membrane. In terms of biological role, component of the cytochrome b6-f complex, which mediates electron transfer between photosystem II (PSII) and photosystem I (PSI), cyclic electron flow around PSI, and state transitions. This Picea abies (Norway spruce) protein is Cytochrome b6-f complex subunit 4.